Here is a 922-residue protein sequence, read N- to C-terminus: uncharacterized protein (922 aa).

Disordered stretches follow at residues 459 to 522 (SLQD…QPKN), 539 to 627 (SNSA…SSLG), 649 to 668 (GFSS…RQPF), 692 to 835 (QKLD…VTSL), and 856 to 879 (PWRK…RPER). Residues 546-567 (KAKHSSNKPHKAASSRISKTKS) are compositionally biased toward basic residues. The segment covering 582 to 600 (KKSEESKQSGKKVKVEEKQ) has biased composition (basic and acidic residues). Over residues 651 to 660 (SSSRTLGSSS) the composition is skewed to low complexity. The span at 692 to 702 (QKLDGSAEKEC) shows a compositional bias: basic and acidic residues. 2 stretches are compositionally biased toward polar residues: residues 755-779 (DSTN…SLTG) and 790-824 (KATQ…SSLQ). Positions 872–899 (TEEQRPEREAMKRKAQQERENAAKYTSL) form a coiled coil.

This is an uncharacterized protein from Homo sapiens (Human).